We begin with the raw amino-acid sequence, 175 residues long: Dual-action ribosomal maturation protein DarP (175 aa).

The protein belongs to the DarP family.

The protein localises to the cytoplasm. Member of a network of 50S ribosomal subunit biogenesis factors which assembles along the 30S-50S interface, preventing incorrect 23S rRNA structures from forming. Promotes peptidyl transferase center (PTC) maturation. In Vibrio parahaemolyticus serotype O3:K6 (strain RIMD 2210633), this protein is Dual-action ribosomal maturation protein DarP.